The following is a 443-amino-acid chain: ATP-dependent protease ATPase subunit HslU (443 aa).

ATP is bound by residues isoleucine 18, 60–65 (GVGKTE), aspartate 256, glutamate 321, and arginine 393.

It belongs to the ClpX chaperone family. HslU subfamily. In terms of assembly, a double ring-shaped homohexamer of HslV is capped on each side by a ring-shaped HslU homohexamer. The assembly of the HslU/HslV complex is dependent on binding of ATP.

Its subcellular location is the cytoplasm. In terms of biological role, ATPase subunit of a proteasome-like degradation complex; this subunit has chaperone activity. The binding of ATP and its subsequent hydrolysis by HslU are essential for unfolding of protein substrates subsequently hydrolyzed by HslV. HslU recognizes the N-terminal part of its protein substrates and unfolds these before they are guided to HslV for hydrolysis. This Buchnera aphidicola subsp. Schizaphis graminum (strain Sg) protein is ATP-dependent protease ATPase subunit HslU.